A 159-amino-acid polypeptide reads, in one-letter code: ATP synthase subunit b (159 aa).

The helical transmembrane segment at 8 to 28 (ILATIINFIILILILKHFFWD) threads the bilayer.

This sequence belongs to the ATPase B chain family. In terms of assembly, F-type ATPases have 2 components, F(1) - the catalytic core - and F(0) - the membrane proton channel. F(1) has five subunits: alpha(3), beta(3), gamma(1), delta(1), epsilon(1). F(0) has three main subunits: a(1), b(2) and c(10-14). The alpha and beta chains form an alternating ring which encloses part of the gamma chain. F(1) is attached to F(0) by a central stalk formed by the gamma and epsilon chains, while a peripheral stalk is formed by the delta and b chains.

The protein localises to the cell membrane. In terms of biological role, f(1)F(0) ATP synthase produces ATP from ADP in the presence of a proton or sodium gradient. F-type ATPases consist of two structural domains, F(1) containing the extramembraneous catalytic core and F(0) containing the membrane proton channel, linked together by a central stalk and a peripheral stalk. During catalysis, ATP synthesis in the catalytic domain of F(1) is coupled via a rotary mechanism of the central stalk subunits to proton translocation. Component of the F(0) channel, it forms part of the peripheral stalk, linking F(1) to F(0). This is ATP synthase subunit b from Clostridium perfringens (strain SM101 / Type A).